The sequence spans 460 residues: ATP synthase subunit beta (460 aa).

ATP is bound at residue Gly150 to Thr157.

Belongs to the ATPase alpha/beta chains family. As to quaternary structure, F-type ATPases have 2 components, CF(1) - the catalytic core - and CF(0) - the membrane proton channel. CF(1) has five subunits: alpha(3), beta(3), gamma(1), delta(1), epsilon(1). CF(0) has three main subunits: a(1), b(2) and c(9-12). The alpha and beta chains form an alternating ring which encloses part of the gamma chain. CF(1) is attached to CF(0) by a central stalk formed by the gamma and epsilon chains, while a peripheral stalk is formed by the delta and b chains.

The protein localises to the cell inner membrane. The catalysed reaction is ATP + H2O + 4 H(+)(in) = ADP + phosphate + 5 H(+)(out). Its function is as follows. Produces ATP from ADP in the presence of a proton gradient across the membrane. The catalytic sites are hosted primarily by the beta subunits. The sequence is that of ATP synthase subunit beta from Salmonella agona (strain SL483).